The following is a 117-amino-acid chain: Large ribosomal subunit protein bL20 (117 aa).

This sequence belongs to the bacterial ribosomal protein bL20 family.

Functionally, binds directly to 23S ribosomal RNA and is necessary for the in vitro assembly process of the 50S ribosomal subunit. It is not involved in the protein synthesizing functions of that subunit. The polypeptide is Large ribosomal subunit protein bL20 (Trichlorobacter lovleyi (strain ATCC BAA-1151 / DSM 17278 / SZ) (Geobacter lovleyi)).